The following is a 723-amino-acid chain: Catalase-peroxidase (723 aa).

The tryptophyl-tyrosyl-methioninium (Trp-Tyr) (with M-251) cross-link spans 96 to 225 (WHAAGSYRVA…LAAVMMGLIY (130 aa)). Residue His97 is the Proton acceptor of the active site. The segment at residues 225-251 (YVNPEGVDGNPDPLKTAEDVRVTFARM) is a cross-link (tryptophyl-tyrosyl-methioninium (Tyr-Met) (with W-96)). His266 contacts heme b.

It belongs to the peroxidase family. Peroxidase/catalase subfamily. Homodimer or homotetramer. Heme b serves as cofactor. In terms of processing, formation of the three residue Trp-Tyr-Met cross-link is important for the catalase, but not the peroxidase activity of the enzyme.

It catalyses the reaction H2O2 + AH2 = A + 2 H2O. The enzyme catalyses 2 H2O2 = O2 + 2 H2O. Its function is as follows. Bifunctional enzyme with both catalase and broad-spectrum peroxidase activity. This chain is Catalase-peroxidase, found in Alkalilimnicola ehrlichii (strain ATCC BAA-1101 / DSM 17681 / MLHE-1).